The sequence spans 115 residues: Transcriptional regulator protein FixT (115 aa).

As to quaternary structure, interacts directly with FixL.

In terms of biological role, prevents transcription of the intermediate key regulatory genes nifA and fixK by counteracting the activity of the FixLJ two-component system. Acts as an inhibitor of the sensor hemoprotein kinase fixL, preventing the production or the accumulation of its phosphorylated form. In Rhizobium meliloti (strain 1021) (Ensifer meliloti), this protein is Transcriptional regulator protein FixT (fixT).